The primary structure comprises 221 residues: Small ribosomal subunit protein uS4c (221 aa).

Residues 26 to 53 (RKRTDNRCMPGQHRKKRNDSTKKTKNSK) are disordered. Positions 37-53 (QHRKKRNDSTKKTKNSK) are enriched in basic residues. In terms of domain architecture, S4 RNA-binding spans 103–161 (MRLDNIVFRLGMAPTIPAARQLVNHGHIVVNNKKVDISSYQCQSQDVISVTKNKTIRTL).

This sequence belongs to the universal ribosomal protein uS4 family. In terms of assembly, part of the 30S ribosomal subunit. Contacts protein S5. The interaction surface between S4 and S5 is involved in control of translational fidelity.

It localises to the plastid. It is found in the chloroplast. One of the primary rRNA binding proteins, it binds directly to 16S rRNA where it nucleates assembly of the body of the 30S subunit. Functionally, with S5 and S12 plays an important role in translational accuracy. The protein is Small ribosomal subunit protein uS4c (rps4) of Pleurastrum terricola (Filamentous green alga).